Here is a 205-residue protein sequence, read N- to C-terminus: Nuclear transcription factor Y subunit C-6 (205 aa).

Positions 1–24 (MEPKSTTPPPPPPPPVLGAPVPYP) are disordered.

This sequence belongs to the NFYC/HAP5 subunit family. As to quaternary structure, heterotrimeric transcription factor composed of three components, NF-YA, NF-YB and NF-YC. NF-YB and NF-YC must interact and dimerize for NF-YA association and DNA binding. Interacts with NFYB2. Interacts with NFYB8, NFYB10 and HD5/NFYB11.

It is found in the nucleus. It localises to the cytoplasm. Functionally, component of the NF-Y/HAP transcription factor complex. This is Nuclear transcription factor Y subunit C-6 from Oryza sativa subsp. japonica (Rice).